Consider the following 161-residue polypeptide: NADH-quinone oxidoreductase subunit C (161 aa).

Belongs to the complex I 30 kDa subunit family. NDH-1 is composed of 14 different subunits. Subunits NuoB, C, D, E, F, and G constitute the peripheral sector of the complex.

Its subcellular location is the cell inner membrane. The catalysed reaction is a quinone + NADH + 5 H(+)(in) = a quinol + NAD(+) + 4 H(+)(out). Its function is as follows. NDH-1 shuttles electrons from NADH, via FMN and iron-sulfur (Fe-S) centers, to quinones in the respiratory chain. The immediate electron acceptor for the enzyme in this species is believed to be ubiquinone. Couples the redox reaction to proton translocation (for every two electrons transferred, four hydrogen ions are translocated across the cytoplasmic membrane), and thus conserves the redox energy in a proton gradient. The protein is NADH-quinone oxidoreductase subunit C of Citrifermentans bemidjiense (strain ATCC BAA-1014 / DSM 16622 / JCM 12645 / Bem) (Geobacter bemidjiensis).